The following is a 274-amino-acid chain: Probable formate transporter (274 aa).

7 helical membrane passes run 31 to 51 (IVLS…AEVV), 62 to 82 (AGLV…LVVI), 118 to 138 (VFNL…TGIL), 176 to 196 (AFWR…LAIA), 200 to 220 (IIGK…IGFE), 226 to 246 (MFFI…FFMN), and 248 to 268 (LIPV…CLYW).

This sequence belongs to the FNT transporter (TC 1.A.16) family.

It localises to the cell membrane. In terms of biological role, may act as a formate transporter. This chain is Probable formate transporter (fdhC), found in Methanothermobacter thermautotrophicus (Methanobacterium thermoformicicum).